A 216-amino-acid chain; its full sequence is ATP phosphoribosyltransferase (216 aa).

This sequence belongs to the ATP phosphoribosyltransferase family. Short subfamily. As to quaternary structure, heteromultimer composed of HisG and HisZ subunits.

Its subcellular location is the cytoplasm. It carries out the reaction 1-(5-phospho-beta-D-ribosyl)-ATP + diphosphate = 5-phospho-alpha-D-ribose 1-diphosphate + ATP. The protein operates within amino-acid biosynthesis; L-histidine biosynthesis; L-histidine from 5-phospho-alpha-D-ribose 1-diphosphate: step 1/9. Catalyzes the condensation of ATP and 5-phosphoribose 1-diphosphate to form N'-(5'-phosphoribosyl)-ATP (PR-ATP). Has a crucial role in the pathway because the rate of histidine biosynthesis seems to be controlled primarily by regulation of HisG enzymatic activity. This chain is ATP phosphoribosyltransferase, found in Streptococcus thermophilus (strain ATCC BAA-491 / LMD-9).